The primary structure comprises 209 residues: Ribosomal RNA large subunit methyltransferase E (209 aa).

S-adenosyl-L-methionine is bound by residues Gly-63, Trp-65, Asp-83, Asp-99, and Asp-124. Residue Lys-164 is the Proton acceptor of the active site.

The protein belongs to the class I-like SAM-binding methyltransferase superfamily. RNA methyltransferase RlmE family.

The protein localises to the cytoplasm. It carries out the reaction uridine(2552) in 23S rRNA + S-adenosyl-L-methionine = 2'-O-methyluridine(2552) in 23S rRNA + S-adenosyl-L-homocysteine + H(+). Its function is as follows. Specifically methylates the uridine in position 2552 of 23S rRNA at the 2'-O position of the ribose in the fully assembled 50S ribosomal subunit. This Klebsiella pneumoniae (strain 342) protein is Ribosomal RNA large subunit methyltransferase E.